A 187-amino-acid chain; its full sequence is Capsid protein (187 aa).

A compositionally biased stretch (basic residues) spans 151-180 (RRGSARVVRSPRRRTPSPRRRRSQSPRRRP). The segment at 151–187 (RRGSARVVRSPRRRTPSPRRRRSQSPRRRPQSPASNC) is disordered. A phosphoserine; by host mark is found at S160, S167, and S175. 3 consecutive repeat copies span residues 160 to 164 (SPRRR), 167 to 171 (SPRRR), and 175 to 179 (SPRRR). The interval 160-179 (SPRRRTPSPRRRRSQSPRRR) is 3 X 5 AA repeats of S-P-R-R-R. The Bipartite nuclear localization signal signature appears at 163–180 (RRTPSPRRRRSQSPRRRP). The RNA binding stretch occupies residues 181-187 (QSPASNC).

It belongs to the orthohepadnavirus core antigen family. As to quaternary structure, homodimerizes, then multimerizes. Interacts with cytosol exposed regions of viral L glycoprotein present in the reticulum-to-Golgi compartment. Interacts with human FLNB. Phosphorylated form interacts with host importin alpha; this interaction depends on the exposure of the NLS, which itself depends upon genome maturation and/or phosphorylation of the capsid protein. Interacts with host NUP153. In terms of processing, phosphorylated by host SRPK1, SRPK2, and maybe protein kinase C or GAPDH. Phosphorylation is critical for pregenomic RNA packaging. Protein kinase C phosphorylation is stimulated by HBx protein and may play a role in transport of the viral genome to the nucleus at the late step during the viral replication cycle.

It is found in the virion. It localises to the host cytoplasm. Self assembles to form an icosahedral capsid. Most capsids appear to be large particles with an icosahedral symmetry of T=4 and consist of 240 copies of capsid protein, though a fraction forms smaller T=3 particles consisting of 180 capsid proteins. Entering capsids are transported along microtubules to the nucleus. Phosphorylation of the capsid is thought to induce exposure of nuclear localization signal in the C-terminal portion of the capsid protein that allows binding to the nuclear pore complex via the importin (karyopherin-) alpha and beta. Capsids are imported in intact form through the nuclear pore into the nuclear basket, where it probably binds NUP153. Only capsids that contain the mature viral genome can release the viral DNA and capsid protein into the nucleoplasm. Immature capsids get stuck in the basket. Capsids encapsulate the pre-genomic RNA and the P protein. Pre-genomic RNA is reverse-transcribed into DNA while the capsid is still in the cytoplasm. The capsid can then either be directed to the nucleus, providing more genomes for transcription, or bud through the endoplasmic reticulum to provide new virions. In Urocitellus parryii kennicottii (ASHV), this protein is Capsid protein.